Here is a 324-residue protein sequence, read N- to C-terminus: NADH-ubiquinone oxidoreductase chain 1 (324 aa).

8 helical membrane-spanning segments follow: residues 9–29 (VLNPLAYIVPVLLAVAFLTLL), 75–95 (FLFLATPMLALTLALTLWAPM), 106–126 (LGVLFVLALSSLAVYSILGSG), 146–166 (ISYEVSLGLILLSVIIFTGGF), 177–197 (SIWLVVPAWPLAALWYISTLA), 237–257 (ILLMNTLSAILFLGATHIPAL), 259–279 (ELTAMNLMTKAALLSVVFLWV), and 299–319 (FLPMTLALVLWHLALPIALAG).

Belongs to the complex I subunit 1 family.

Its subcellular location is the mitochondrion inner membrane. The catalysed reaction is a ubiquinone + NADH + 5 H(+)(in) = a ubiquinol + NAD(+) + 4 H(+)(out). Its function is as follows. Core subunit of the mitochondrial membrane respiratory chain NADH dehydrogenase (Complex I) that is believed to belong to the minimal assembly required for catalysis. Complex I functions in the transfer of electrons from NADH to the respiratory chain. The immediate electron acceptor for the enzyme is believed to be ubiquinone. This Thymallus arcticus (Arctic grayling) protein is NADH-ubiquinone oxidoreductase chain 1 (MT-ND1).